The primary structure comprises 299 residues: 33 kDa chaperonin (299 aa).

Intrachain disulfides connect C234-C236 and C268-C271.

This sequence belongs to the HSP33 family. In terms of processing, under oxidizing conditions two disulfide bonds are formed involving the reactive cysteines. Under reducing conditions zinc is bound to the reactive cysteines and the protein is inactive.

The protein localises to the cytoplasm. Its function is as follows. Redox regulated molecular chaperone. Protects both thermally unfolding and oxidatively damaged proteins from irreversible aggregation. Plays an important role in the bacterial defense system toward oxidative stress. The sequence is that of 33 kDa chaperonin from Pseudomonas putida (strain ATCC 700007 / DSM 6899 / JCM 31910 / BCRC 17059 / LMG 24140 / F1).